Consider the following 94-residue polypeptide: Aspartyl/glutamyl-tRNA(Asn/Gln) amidotransferase subunit C (94 aa).

Positions 72-94 (PREKALQGAPEVSEGQFKVPRVV) are disordered.

The protein belongs to the GatC family. In terms of assembly, heterotrimer of A, B and C subunits.

It carries out the reaction L-glutamyl-tRNA(Gln) + L-glutamine + ATP + H2O = L-glutaminyl-tRNA(Gln) + L-glutamate + ADP + phosphate + H(+). The enzyme catalyses L-aspartyl-tRNA(Asn) + L-glutamine + ATP + H2O = L-asparaginyl-tRNA(Asn) + L-glutamate + ADP + phosphate + 2 H(+). Its function is as follows. Allows the formation of correctly charged Asn-tRNA(Asn) or Gln-tRNA(Gln) through the transamidation of misacylated Asp-tRNA(Asn) or Glu-tRNA(Gln) in organisms which lack either or both of asparaginyl-tRNA or glutaminyl-tRNA synthetases. The reaction takes place in the presence of glutamine and ATP through an activated phospho-Asp-tRNA(Asn) or phospho-Glu-tRNA(Gln). The chain is Aspartyl/glutamyl-tRNA(Asn/Gln) amidotransferase subunit C from Moorella thermoacetica (strain ATCC 39073 / JCM 9320).